Reading from the N-terminus, the 132-residue chain is UPF0299 membrane protein Ent638_2744 (132 aa).

A run of 4 helical transmembrane segments spans residues 8–28, 31–51, 63–83, and 93–113; these read VWQY…GIFI, LLPI…LLLA, GCFV…VGVM, and FGPI…VVSW.

This sequence belongs to the UPF0299 family.

Its subcellular location is the cell inner membrane. The sequence is that of UPF0299 membrane protein Ent638_2744 from Enterobacter sp. (strain 638).